The chain runs to 142 residues: Putative pre-16S rRNA nuclease (142 aa).

It belongs to the YqgF nuclease family.

The protein resides in the cytoplasm. Could be a nuclease involved in processing of the 5'-end of pre-16S rRNA. The sequence is that of Putative pre-16S rRNA nuclease from Staphylococcus carnosus (strain TM300).